The chain runs to 212 residues: Pyridoxine/pyridoxamine 5'-phosphate oxidase (212 aa).

Substrate-binding positions include 8–11 (RRTY) and K66. Residues 61-66 (RIVLLK), 76-77 (FT), R82, K83, and Q105 contribute to the FMN site. Residues Y123, R127, and S131 each contribute to the substrate site. FMN-binding positions include 140–141 (QS) and W184. Substrate is bound at residue 190–192 (RLH). FMN is bound at residue R194.

The protein belongs to the pyridoxamine 5'-phosphate oxidase family. In terms of assembly, homodimer. It depends on FMN as a cofactor.

The catalysed reaction is pyridoxamine 5'-phosphate + O2 + H2O = pyridoxal 5'-phosphate + H2O2 + NH4(+). The enzyme catalyses pyridoxine 5'-phosphate + O2 = pyridoxal 5'-phosphate + H2O2. Its pathway is cofactor metabolism; pyridoxal 5'-phosphate salvage; pyridoxal 5'-phosphate from pyridoxamine 5'-phosphate: step 1/1. The protein operates within cofactor metabolism; pyridoxal 5'-phosphate salvage; pyridoxal 5'-phosphate from pyridoxine 5'-phosphate: step 1/1. In terms of biological role, catalyzes the oxidation of either pyridoxine 5'-phosphate (PNP) or pyridoxamine 5'-phosphate (PMP) into pyridoxal 5'-phosphate (PLP). This is Pyridoxine/pyridoxamine 5'-phosphate oxidase from Cupriavidus pinatubonensis (strain JMP 134 / LMG 1197) (Cupriavidus necator (strain JMP 134)).